Reading from the N-terminus, the 131-residue chain is uncharacterized protein (131 aa).

This is an uncharacterized protein from Bacillus subtilis (strain 168).